The primary structure comprises 760 residues: Sphingosine kinase B (760 aa).

Residues 1-108 (MENNNNEPAE…NNNNNEPVTS (108 aa)) form a disordered region. The span at 12–39 (VQEKGPKLKNDIDLNDQFKDEKEKKEEI) shows a compositional bias: basic and acidic residues. A compositionally biased stretch (low complexity) spans 40–106 (SSSSIENKNN…NNNNNNNEPV (67 aa)). The 137-residue stretch at 247–383 (PKNRKIRILI…LDVCIVQQPT (137 aa)) folds into the DAGKc domain. ATP-binding positions include 257-259 (NPK) and Thr-288. 313–316 (SGDG) is a binding site for substrate. Asp-315 acts as the Proton donor/acceptor in catalysis. ATP contacts are provided by residues Glu-320 and 345–347 (GTG). A disordered region spans residues 394–438 (TVTTTTTTTSPTSASPTITSANNNNNNNNNNNNNNNNNNNNNNNN). Asp-461 is a substrate binding site. ATP-binding residues include Arg-468 and Arg-474. Residues 535–605 (DNDNNNKNKN…SSPRSDINMS (71 aa)) form a disordered region. Residues 549–597 (EINSTTSNNNNNNNTTTTSTSSSTSTSTSTSSLTATTTTAKSTNSLSSS) are compositionally biased toward low complexity. 734–736 (DGE) serves as a coordination point for ATP.

The catalysed reaction is a sphingoid base + ATP = a sphingoid 1-phosphate + ADP + H(+). With respect to regulation, inhibited by N,N,-dimethylsphingosine. Functionally, catalyzes the phosphorylation of sphingosine to form sphingosine-1-phosphate (S1P), which probably acts intracellularly as a second messenger perhaps by promoting cell proliferation. The sequence is that of Sphingosine kinase B (sgkB) from Dictyostelium discoideum (Social amoeba).